A 631-amino-acid polypeptide reads, in one-letter code: Forkhead box protein O1 (631 aa).

The span at 1 to 11 shows a compositional bias: pro residues; it reads MAEAPQPPPPL. Disordered stretches follow at residues 1 to 57, 90 to 147, 223 to 324, and 372 to 404; these read MAEA…PAAG, DIRQ…SRRN, SSWW…MPEQ, and PNSS…PNSE. Low complexity-rich tracts occupy residues 37–48 and 100–135; these read NPSSSANSSPAP and QQQQ…PLGA. The fork-head DNA-binding region spans 149–243; the sequence is WGNLSYADLI…KNGKSPRRRA (95 aa). Residues 253–264 are compositionally biased toward basic residues; sequence AKSRGRAAKKKA. Low complexity predominate over residues 265 to 282; it reads SMQSSQDGSSDSPGSQFS. Polar residues-rich tracts occupy residues 303 to 315 and 381 to 403; these read RPRT…TISG and ASMM…SPNS.

Phosphorylated by AKT1; insulin-induced. Post-translationally, IGF1 rapidly induces phosphorylation of Thr-28, Ser-245 and Ser-308. Phosphorylation of Ser-245 decreases DNA-binding activity and promotes the phosphorylation of Thr-28, and Ser-308, which leads to nuclear exclusion and loss of function. Phosphorylation of Ser-318 is independent of IGF1 and leads to reduced function. As to expression, localized to the animal hemisphere during early cleavage stages. At early tadpole stages, expressed in the branchial arches, pronephros and liver. Within the head, expressed in the forming thyroid gland and in head mesenchyme anterior to the eyes.

Its subcellular location is the cytoplasm. It localises to the nucleus. Its function is as follows. Transcription factor that regulates metabolic homeostasis in response to oxidative stress. Binds to the consensus sequence 5'-TT[G/A]TTTTG-3' and the related Daf-16 family binding element (DBE) with consensus sequence 5'-TT[G/A]TTTAC-3'. Main regulator of redox balance and osteoblast numbers and controls bone mass. Orchestrates the endocrine function of the skeleton in regulating glucose metabolism. Also acts as a key regulator of chondrogenic commitment of skeletal progenitor cells in response to lipid availability: when lipids levels are low, translocates to the nucleus and promotes expression of sox9, which induces chondrogenic commitment and suppresses fatty acid oxidation. Acts synergistically with atf4 to suppress osteocalcin/bglap activity, increasing glucose levels and triggering glucose intolerance and insulin insensitivity. Also suppresses the transcriptional activity of runx2, an upstream activator of osteocalcin/bglap. May act as a positive regulator of apoptosis in cardiac smooth muscle cells as a result of its transcriptional activation of pro-apoptotic genes. This Xenopus laevis (African clawed frog) protein is Forkhead box protein O1.